A 426-amino-acid polypeptide reads, in one-letter code: Histidine--tRNA ligase (426 aa).

It belongs to the class-II aminoacyl-tRNA synthetase family. Homodimer.

It is found in the cytoplasm. It carries out the reaction tRNA(His) + L-histidine + ATP = L-histidyl-tRNA(His) + AMP + diphosphate + H(+). The chain is Histidine--tRNA ligase (hisS) from Streptococcus dysgalactiae subsp. equisimilis (Streptococcus equisimilis).